Reading from the N-terminus, the 145-residue chain is 3-hydroxyacyl-[acyl-carrier-protein] dehydratase FabZ (145 aa).

His48 is an active-site residue.

It belongs to the thioester dehydratase family. FabZ subfamily.

Its subcellular location is the cytoplasm. It carries out the reaction a (3R)-hydroxyacyl-[ACP] = a (2E)-enoyl-[ACP] + H2O. Its function is as follows. Involved in unsaturated fatty acids biosynthesis. Catalyzes the dehydration of short chain beta-hydroxyacyl-ACPs and long chain saturated and unsaturated beta-hydroxyacyl-ACPs. This chain is 3-hydroxyacyl-[acyl-carrier-protein] dehydratase FabZ, found in Saccharophagus degradans (strain 2-40 / ATCC 43961 / DSM 17024).